The primary structure comprises 579 residues: Arginine--tRNA ligase (579 aa).

Residues 128-138 carry the 'HIGH' region motif; that stretch reads PNLAKEMHVGH.

The protein belongs to the class-I aminoacyl-tRNA synthetase family. In terms of assembly, monomer.

It localises to the cytoplasm. It catalyses the reaction tRNA(Arg) + L-arginine + ATP = L-arginyl-tRNA(Arg) + AMP + diphosphate. In Pseudomonas syringae pv. syringae (strain B728a), this protein is Arginine--tRNA ligase.